A 460-amino-acid polypeptide reads, in one-letter code: Bifunctional protein GlmU (460 aa).

The pyrophosphorylase stretch occupies residues 1 to 237 (MSSNQYTAGA…DPDLLGVNTP (237 aa)). Residues 13-16 (LAAG), Lys-27, Gln-78, and 83-84 (GT) contribute to the UDP-N-acetyl-alpha-D-glucosamine site. Asp-109 serves as a coordination point for Mg(2+). 4 residues coordinate UDP-N-acetyl-alpha-D-glucosamine: Gly-146, Glu-160, Asn-177, and Asn-235. Position 235 (Asn-235) interacts with Mg(2+). Positions 238 to 258 (AELMRSEELLRENIVTRHLHN) are linker. Residues 259-460 (GVHVHAAGSV…QKNLRKTRHS (202 aa)) form an N-acetyltransferase region. Residues Arg-341 and Lys-359 each contribute to the UDP-N-acetyl-alpha-D-glucosamine site. His-371 (proton acceptor) is an active-site residue. UDP-N-acetyl-alpha-D-glucosamine contacts are provided by Tyr-374 and Asn-385. Residues Ala-388, 394–395 (NY), Ser-413, Ala-431, and Arg-448 each bind acetyl-CoA.

This sequence in the N-terminal section; belongs to the N-acetylglucosamine-1-phosphate uridyltransferase family. In the C-terminal section; belongs to the transferase hexapeptide repeat family. In terms of assembly, homotrimer. Mg(2+) is required as a cofactor.

Its subcellular location is the cytoplasm. It carries out the reaction alpha-D-glucosamine 1-phosphate + acetyl-CoA = N-acetyl-alpha-D-glucosamine 1-phosphate + CoA + H(+). The enzyme catalyses N-acetyl-alpha-D-glucosamine 1-phosphate + UTP + H(+) = UDP-N-acetyl-alpha-D-glucosamine + diphosphate. Its pathway is nucleotide-sugar biosynthesis; UDP-N-acetyl-alpha-D-glucosamine biosynthesis; N-acetyl-alpha-D-glucosamine 1-phosphate from alpha-D-glucosamine 6-phosphate (route II): step 2/2. It participates in nucleotide-sugar biosynthesis; UDP-N-acetyl-alpha-D-glucosamine biosynthesis; UDP-N-acetyl-alpha-D-glucosamine from N-acetyl-alpha-D-glucosamine 1-phosphate: step 1/1. It functions in the pathway bacterial outer membrane biogenesis; LPS lipid A biosynthesis. Functionally, catalyzes the last two sequential reactions in the de novo biosynthetic pathway for UDP-N-acetylglucosamine (UDP-GlcNAc). The C-terminal domain catalyzes the transfer of acetyl group from acetyl coenzyme A to glucosamine-1-phosphate (GlcN-1-P) to produce N-acetylglucosamine-1-phosphate (GlcNAc-1-P), which is converted into UDP-GlcNAc by the transfer of uridine 5-monophosphate (from uridine 5-triphosphate), a reaction catalyzed by the N-terminal domain. The polypeptide is Bifunctional protein GlmU (Oleidesulfovibrio alaskensis (strain ATCC BAA-1058 / DSM 17464 / G20) (Desulfovibrio alaskensis)).